The primary structure comprises 341 residues: Putative UPF0607 protein ENSP00000381514 (341 aa).

The span at 78–89 (AEEPKEATEVKD) shows a compositional bias: basic and acidic residues. Disordered stretches follow at residues 78–131 (AEEP…NPRP) and 216–282 (GLLT…KLPC). Residues 108-127 (EAASTSRPLETQGNLTSSWY) show a composition bias toward polar residues. Residues 243 to 252 (AGHRSRKRKL) show a composition bias toward basic residues.

It belongs to the UPF0607 family.

This Homo sapiens (Human) protein is Putative UPF0607 protein ENSP00000381514.